The following is a 99-amino-acid chain: Integration host factor subunit alpha (99 aa).

It belongs to the bacterial histone-like protein family. As to quaternary structure, heterodimer of an alpha and a beta chain.

Its function is as follows. This protein is one of the two subunits of integration host factor, a specific DNA-binding protein that functions in genetic recombination as well as in transcriptional and translational control. The chain is Integration host factor subunit alpha from Pseudoalteromonas translucida (strain TAC 125).